Reading from the N-terminus, the 329-residue chain is Ribosomal RNA small subunit methyltransferase H (329 aa).

Residues 44 to 46, D62, D110, and Q117 each bind S-adenosyl-L-methionine; that span reads GGY. The interval 297–329 is disordered; sequence APAELAANPRARSARLRSAERTSAPARRLGDAA.

Belongs to the methyltransferase superfamily. RsmH family.

It localises to the cytoplasm. It carries out the reaction cytidine(1402) in 16S rRNA + S-adenosyl-L-methionine = N(4)-methylcytidine(1402) in 16S rRNA + S-adenosyl-L-homocysteine + H(+). Specifically methylates the N4 position of cytidine in position 1402 (C1402) of 16S rRNA. This is Ribosomal RNA small subunit methyltransferase H from Rhodospirillum centenum (strain ATCC 51521 / SW).